We begin with the raw amino-acid sequence, 159 residues long: Transcription elongation factor GreA (159 aa).

This sequence belongs to the GreA/GreB family.

Functionally, necessary for efficient RNA polymerase transcription elongation past template-encoded arresting sites. The arresting sites in DNA have the property of trapping a certain fraction of elongating RNA polymerases that pass through, resulting in locked ternary complexes. Cleavage of the nascent transcript by cleavage factors such as GreA or GreB allows the resumption of elongation from the new 3'terminus. GreA releases sequences of 2 to 3 nucleotides. The chain is Transcription elongation factor GreA from Orientia tsutsugamushi (strain Ikeda) (Rickettsia tsutsugamushi).